The sequence spans 548 residues: Chaperonin GroEL (548 aa).

Residues 30–33 (TLGP), Lys-51, 87–91 (DGTTT), Gly-415, 479–481 (NAA), and Asp-495 each bind ATP. The tract at residues 524–548 (LPKEDKSSDSNSSPAGGMGGMGGMM) is disordered. Residues 539–548 (GGMGGMGGMM) show a composition bias toward gly residues.

It belongs to the chaperonin (HSP60) family. As to quaternary structure, forms a cylinder of 14 subunits composed of two heptameric rings stacked back-to-back. Interacts with the co-chaperonin GroES.

It localises to the cytoplasm. It carries out the reaction ATP + H2O + a folded polypeptide = ADP + phosphate + an unfolded polypeptide.. In terms of biological role, together with its co-chaperonin GroES, plays an essential role in assisting protein folding. The GroEL-GroES system forms a nano-cage that allows encapsulation of the non-native substrate proteins and provides a physical environment optimized to promote and accelerate protein folding. The chain is Chaperonin GroEL from Buchnera aphidicola subsp. Myzus persicae (Myzus persicae primary endosymbiont).